A 267-amino-acid chain; its full sequence is Alpha carbonic anhydrase 4 (267 aa).

An N-terminal signal peptide occupies residues 1 to 26 (MDTNAKTIFFMAMCFIYLSFPNISHA). N22 carries an N-linked (GlcNAc...) asparagine glycan. Residues 34–264 (TPFTYEQKTE…SKGRSVWFYD (231 aa)) form the Alpha-carbonic anhydrase domain. Residues C59 and C214 are joined by a disulfide bond. H99 (proton acceptor) is an active-site residue. H125 and H127 together coordinate Zn(2+). N-linked (GlcNAc...) asparagine glycosylation occurs at N135. A Zn(2+)-binding site is contributed by H144. 210-211 (TV) lines the substrate pocket.

It belongs to the alpha-class carbonic anhydrase family. Zn(2+) serves as cofactor. Post-translationally, N-glycosylated.

It localises to the plastid. The protein localises to the chloroplast stroma. The catalysed reaction is hydrogencarbonate + H(+) = CO2 + H2O. Its function is as follows. Reversible hydration of carbon dioxide. The polypeptide is Alpha carbonic anhydrase 4 (ACA4) (Arabidopsis thaliana (Mouse-ear cress)).